The primary structure comprises 199 residues: NAD(P)H dehydrogenase (quinone) (199 aa).

One can recognise a Flavodoxin-like domain in the interval 4–190; the sequence is ILVLYYSMYG…AIARFQGEHV (187 aa). FMN is bound by residues 10-15 and 79-81; these read SMYGHI and TRF. Y12 lines the NAD(+) pocket. Position 99 (W99) interacts with substrate. Residues 114 to 119 and H134 each bind FMN; that span reads STGTGG.

Belongs to the WrbA family. FMN is required as a cofactor.

The enzyme catalyses a quinone + NADH + H(+) = a quinol + NAD(+). It catalyses the reaction a quinone + NADPH + H(+) = a quinol + NADP(+). The sequence is that of NAD(P)H dehydrogenase (quinone) from Yersinia enterocolitica serotype O:8 / biotype 1B (strain NCTC 13174 / 8081).